The primary structure comprises 84 residues: Exodeoxyribonuclease 7 small subunit (84 aa).

This sequence belongs to the XseB family. In terms of assembly, heterooligomer composed of large and small subunits.

It localises to the cytoplasm. The catalysed reaction is Exonucleolytic cleavage in either 5'- to 3'- or 3'- to 5'-direction to yield nucleoside 5'-phosphates.. In terms of biological role, bidirectionally degrades single-stranded DNA into large acid-insoluble oligonucleotides, which are then degraded further into small acid-soluble oligonucleotides. In Bacillus velezensis (strain DSM 23117 / BGSC 10A6 / LMG 26770 / FZB42) (Bacillus amyloliquefaciens subsp. plantarum), this protein is Exodeoxyribonuclease 7 small subunit.